The primary structure comprises 544 residues: Chaperonin GroEL (544 aa).

Residues T30–P33, K51, D87–T91, G415, D481–L483, and D497 contribute to the ATP site.

The protein belongs to the chaperonin (HSP60) family. Forms a cylinder of 14 subunits composed of two heptameric rings stacked back-to-back. Interacts with the co-chaperonin GroES.

The protein resides in the cytoplasm. The catalysed reaction is ATP + H2O + a folded polypeptide = ADP + phosphate + an unfolded polypeptide.. Functionally, together with its co-chaperonin GroES, plays an essential role in assisting protein folding. The GroEL-GroES system forms a nano-cage that allows encapsulation of the non-native substrate proteins and provides a physical environment optimized to promote and accelerate protein folding. This is Chaperonin GroEL from Chlamydia felis (strain Fe/C-56) (Chlamydophila felis).